The following is a 182-amino-acid chain: Adenine phosphoribosyltransferase (182 aa).

The protein belongs to the purine/pyrimidine phosphoribosyltransferase family. In terms of assembly, homodimer.

It localises to the cytoplasm. It carries out the reaction AMP + diphosphate = 5-phospho-alpha-D-ribose 1-diphosphate + adenine. Its pathway is purine metabolism; AMP biosynthesis via salvage pathway; AMP from adenine: step 1/1. Its function is as follows. Catalyzes a salvage reaction resulting in the formation of AMP, that is energically less costly than de novo synthesis. The sequence is that of Adenine phosphoribosyltransferase from Pseudomonas fluorescens (strain SBW25).